The sequence spans 308 residues: Formamidopyrimidine-DNA glycosylase (308 aa).

The Schiff-base intermediate with DNA role is filled by Pro-2. Glu-3 acts as the Proton donor in catalysis. The active-site Proton donor; for beta-elimination activity is the Lys-61. 3 residues coordinate DNA: His-100, Arg-120, and Arg-181. The FPG-type zinc finger occupies 267–301 (AVYGQEGRPCPRCGALVRRDAFMNRSSFSCPVCQP). Residue Arg-291 is the Proton donor; for delta-elimination activity of the active site.

Belongs to the FPG family. In terms of assembly, monomer. The cofactor is Zn(2+).

The enzyme catalyses Hydrolysis of DNA containing ring-opened 7-methylguanine residues, releasing 2,6-diamino-4-hydroxy-5-(N-methyl)formamidopyrimidine.. The catalysed reaction is 2'-deoxyribonucleotide-(2'-deoxyribose 5'-phosphate)-2'-deoxyribonucleotide-DNA = a 3'-end 2'-deoxyribonucleotide-(2,3-dehydro-2,3-deoxyribose 5'-phosphate)-DNA + a 5'-end 5'-phospho-2'-deoxyribonucleoside-DNA + H(+). In terms of biological role, involved in base excision repair of DNA damaged by oxidation or by mutagenic agents. Acts as a DNA glycosylase that recognizes and removes damaged bases. Has a preference for oxidized purines, such as 7,8-dihydro-8-oxoguanine (8-oxoG). Has AP (apurinic/apyrimidinic) lyase activity and introduces nicks in the DNA strand. Cleaves the DNA backbone by beta-delta elimination to generate a single-strand break at the site of the removed base with both 3'- and 5'-phosphates. The protein is Formamidopyrimidine-DNA glycosylase of Kineococcus radiotolerans (strain ATCC BAA-149 / DSM 14245 / SRS30216).